Consider the following 412-residue polypeptide: Subtilisin-like protease 6 (412 aa).

Positions 1-20 (MGFITKAIPIVLAALSTVNG) are cleaved as a signal peptide. Positions 21–126 (AKILEAGPHA…VVRTSTNGTN (106 aa)) are excised as a propeptide. In terms of domain architecture, Inhibitor I9 spans 36 to 120 (KYIVVMKREV…YIEPDFVVRT (85 aa)). N-linked (GlcNAc...) asparagine glycans are attached at residues Asn-123 and Asn-126. Residues 135–412 (SWGLARVSSK…SKLIYNGSGK (278 aa)) enclose the Peptidase S8 domain. Residues Asp-167 and His-198 each act as charge relay system in the active site. Residues Asn-252 and Asn-264 are each glycosylated (N-linked (GlcNAc...) asparagine). The active-site Charge relay system is Ser-358. N-linked (GlcNAc...) asparagine glycosylation is present at Asn-408.

This sequence belongs to the peptidase S8 family.

The protein localises to the secreted. Its function is as follows. Secreted subtilisin-like serine protease with keratinolytic activity that contributes to pathogenicity. This Trichophyton equinum (Horse ringworm fungus) protein is Subtilisin-like protease 6 (SUB6).